The sequence spans 557 residues: Ras-specific guanine nucleotide-releasing factor RalGPS2 (557 aa).

The region spanning 49-287 is the Ras-GEF domain; it reads TPEEYAGQIT…YKLSLKIEPG (239 aa). Residues 283–314 are disordered; sequence KIEPGTSTPRSAASREDLVGPEVGASPQSGRK. Phosphoserine occurs at positions 293, 296, 308, and 311. At T326 the chain carries Phosphothreonine. Residues 327–330 carry the PXXP motif; sequence PPSP. S329 and S343 each carry phosphoserine. Position 361 is a phosphothreonine (T361). Residues 368-409 form a disordered region; the sequence is RHLLDDSVMEPHAPSRGQAESSTLSSGISIGSSDGSELSEET. Residue S374 is modified to Phosphoserine. Positions 387–403 are enriched in low complexity; sequence ESSTLSSGISIGSSDGS. The PH domain occupies 431-543; that stretch reads AVTIQGVLRR…WFKHLSAACQ (113 aa). Residues 433 to 557 are required for stimulation of nucleotide exchange by RALA; sequence TIQGVLRRKT…QVPTNLMTFE (125 aa).

As to quaternary structure, interacts with the SH3 domains of GRB2 and PLCG1. Interacts with RALA.

The protein localises to the cytoplasm. It is found in the cell membrane. Its function is as follows. Guanine nucleotide exchange factor for the small GTPase RALA. May be involved in cytoskeletal organization. May also be involved in the stimulation of transcription in a Ras-independent fashion. This is Ras-specific guanine nucleotide-releasing factor RalGPS2 (RALGPS2) from Macaca fascicularis (Crab-eating macaque).